A 375-amino-acid polypeptide reads, in one-letter code: MKFELDTTDGRARRGRLVFERGVVETPAFMPVGTYGTVKGMTPEEVEATGAQIILGNTFHLWLRPGQEIMKLHGDLHDFMQWKGPILTDSGGFQVFSLGDIRKITEQGVHFRNPINGDPIFLDPEKSMEIQYDLGSDIVMIFDECTPYPADWDYAKCSMEMSLRWAKRSRDRFDGLGNKNALFGIIQGSVYEDLRDISVKGLVEIGFDGYAVGGLAVGEPKADMHRILEHVCPQIPADKPRYLMGVGKPEDLVEGVRRGIDMFDCVMPTRNARNGHLFVTDGVVKIRNAKHKSDTSPLDAECDCYTCRNYSRAYLHHLDRCNEILGARLNTIHNLRYYQRLMAGLRKAIEEGKLESFVTEFYQRQGRPVPPLNVD.

The active-site Proton acceptor is aspartate 89. Substrate-binding positions include aspartate 89–phenylalanine 93, aspartate 143, glutamine 187, and glycine 214. The tract at residues glycine 245–aspartate 251 is RNA binding. Aspartate 264 acts as the Nucleophile in catalysis. The interval threonine 269 to arginine 273 is RNA binding; important for wobble base 34 recognition. 4 residues coordinate Zn(2+): cysteine 302, cysteine 304, cysteine 307, and histidine 333.

It belongs to the queuine tRNA-ribosyltransferase family. In terms of assembly, homodimer. Within each dimer, one monomer is responsible for RNA recognition and catalysis, while the other monomer binds to the replacement base PreQ1. The cofactor is Zn(2+).

The catalysed reaction is 7-aminomethyl-7-carbaguanine + guanosine(34) in tRNA = 7-aminomethyl-7-carbaguanosine(34) in tRNA + guanine. It participates in tRNA modification; tRNA-queuosine biosynthesis. Its function is as follows. Catalyzes the base-exchange of a guanine (G) residue with the queuine precursor 7-aminomethyl-7-deazaguanine (PreQ1) at position 34 (anticodon wobble position) in tRNAs with GU(N) anticodons (tRNA-Asp, -Asn, -His and -Tyr). Catalysis occurs through a double-displacement mechanism. The nucleophile active site attacks the C1' of nucleotide 34 to detach the guanine base from the RNA, forming a covalent enzyme-RNA intermediate. The proton acceptor active site deprotonates the incoming PreQ1, allowing a nucleophilic attack on the C1' of the ribose to form the product. After dissociation, two additional enzymatic reactions on the tRNA convert PreQ1 to queuine (Q), resulting in the hypermodified nucleoside queuosine (7-(((4,5-cis-dihydroxy-2-cyclopenten-1-yl)amino)methyl)-7-deazaguanosine). This chain is Queuine tRNA-ribosyltransferase, found in Salmonella arizonae (strain ATCC BAA-731 / CDC346-86 / RSK2980).